A 227-amino-acid chain; its full sequence is Cytidylate kinase (227 aa).

Position 12-20 (12-20 (GPSGAGKGT)) interacts with ATP.

This sequence belongs to the cytidylate kinase family. Type 1 subfamily.

The protein resides in the cytoplasm. The catalysed reaction is CMP + ATP = CDP + ADP. The enzyme catalyses dCMP + ATP = dCDP + ADP. The protein is Cytidylate kinase of Erwinia tasmaniensis (strain DSM 17950 / CFBP 7177 / CIP 109463 / NCPPB 4357 / Et1/99).